Here is a 96-residue protein sequence, read N- to C-terminus: MKKTFTGVVVSDKADKTVSVKVERRFAHPLYGKVVTRSHKYAAHDENNEYKIGDRVEIIAVRPISKTKTWKVTKLIERPRGIETTLAETEVAGGEA.

This sequence belongs to the universal ribosomal protein uS17 family. Part of the 30S ribosomal subunit.

Functionally, one of the primary rRNA binding proteins, it binds specifically to the 5'-end of 16S ribosomal RNA. The chain is Small ribosomal subunit protein uS17 from Deinococcus radiodurans (strain ATCC 13939 / DSM 20539 / JCM 16871 / CCUG 27074 / LMG 4051 / NBRC 15346 / NCIMB 9279 / VKM B-1422 / R1).